The primary structure comprises 241 residues: 2,3,4,5-tetrahydropyridine-2,6-dicarboxylate N-acetyltransferase (241 aa).

The protein belongs to the transferase hexapeptide repeat family. DapH subfamily.

It catalyses the reaction (S)-2,3,4,5-tetrahydrodipicolinate + acetyl-CoA + H2O = L-2-acetamido-6-oxoheptanedioate + CoA. It functions in the pathway amino-acid biosynthesis; L-lysine biosynthesis via DAP pathway; LL-2,6-diaminopimelate from (S)-tetrahydrodipicolinate (acetylase route): step 1/3. Catalyzes the transfer of an acetyl group from acetyl-CoA to tetrahydrodipicolinate. This chain is 2,3,4,5-tetrahydropyridine-2,6-dicarboxylate N-acetyltransferase, found in Caldanaerobacter subterraneus subsp. tengcongensis (strain DSM 15242 / JCM 11007 / NBRC 100824 / MB4) (Thermoanaerobacter tengcongensis).